A 498-amino-acid polypeptide reads, in one-letter code: Hexokinase-1 (498 aa).

A helical membrane pass occupies residues 4-24 (AAVGAAVVCTAAVCAAAAVLV). A Hexokinase domain is found at 35–487 (GRVMAILKEL…SGIGAALLAA (453 aa)). Residues 90 to 228 (TGDEHGLFYA…GVDMRVTALV (139 aa)) are hexokinase small subdomain. 3 residues coordinate ADP: Gly-104, Thr-105, and Asn-106. Residues Thr-194, Lys-195, Asn-229, and Asp-230 each coordinate D-glucose. Residues 229-476 (NDTVGTLAGG…ETIVIEHSND (248 aa)) form a hexokinase large subdomain region. ADP is bound at residue Thr-253. D-glucose is bound by residues Asn-256, Glu-284, and Glu-315. Gly-441 lines the ADP pocket.

Belongs to the hexokinase family.

The protein resides in the plastid. The protein localises to the chloroplast outer membrane. It catalyses the reaction a D-hexose + ATP = a D-hexose 6-phosphate + ADP + H(+). It carries out the reaction D-fructose + ATP = D-fructose 6-phosphate + ADP + H(+). The enzyme catalyses D-glucose + ATP = D-glucose 6-phosphate + ADP + H(+). It functions in the pathway carbohydrate metabolism; hexose metabolism. The protein operates within carbohydrate degradation; glycolysis; D-glyceraldehyde 3-phosphate and glycerone phosphate from D-glucose: step 1/4. Its function is as follows. Fructose and glucose phosphorylating enzyme. This Spinacia oleracea (Spinach) protein is Hexokinase-1 (HXK1).